A 91-amino-acid polypeptide reads, in one-letter code: Small ribosomal subunit protein uS19 (91 aa).

The tract at residues 72 to 91 (GEFSPTRTYTGHGSEKGKKK) is disordered.

It belongs to the universal ribosomal protein uS19 family.

Functionally, protein S19 forms a complex with S13 that binds strongly to the 16S ribosomal RNA. The protein is Small ribosomal subunit protein uS19 of Mycoplasma mobile (strain ATCC 43663 / 163K / NCTC 11711) (Mesomycoplasma mobile).